The primary structure comprises 343 residues: Glucan endo-1,3-beta-glucosidase, acidic isoform GI9 (343 aa).

The signal sequence occupies residues 1–29 (MTLCIKNGFLAAALVLVGLLICSIQMIGA). At Gln-30 the chain carries Pyrrolidone carboxylic acid. The active-site Proton donor is Glu-124. The active-site Nucleophile is Glu-264.

The protein belongs to the glycosyl hydrolase 17 family.

The protein localises to the secreted. It localises to the extracellular space. The catalysed reaction is Hydrolysis of (1-&gt;3)-beta-D-glucosidic linkages in (1-&gt;3)-beta-D-glucans.. Its function is as follows. Implicated in the defense of plants against pathogens. The chain is Glucan endo-1,3-beta-glucosidase, acidic isoform GI9 (PR2) from Nicotiana tabacum (Common tobacco).